The primary structure comprises 288 residues: Formamidopyrimidine-DNA glycosylase (288 aa).

The active-site Schiff-base intermediate with DNA is the P2. Residue E3 is the Proton donor of the active site. The Proton donor; for beta-elimination activity role is filled by K58. The DNA site is built by H99, R118, and K161. The FPG-type zinc finger occupies 252-288; sequence RVYDREAEPCPREGCGGTIKRIVQAGRSTFFCAKCQR. The Proton donor; for delta-elimination activity role is filled by R278.

It belongs to the FPG family. As to quaternary structure, monomer. The cofactor is Zn(2+).

The catalysed reaction is Hydrolysis of DNA containing ring-opened 7-methylguanine residues, releasing 2,6-diamino-4-hydroxy-5-(N-methyl)formamidopyrimidine.. It carries out the reaction 2'-deoxyribonucleotide-(2'-deoxyribose 5'-phosphate)-2'-deoxyribonucleotide-DNA = a 3'-end 2'-deoxyribonucleotide-(2,3-dehydro-2,3-deoxyribose 5'-phosphate)-DNA + a 5'-end 5'-phospho-2'-deoxyribonucleoside-DNA + H(+). In terms of biological role, involved in base excision repair of DNA damaged by oxidation or by mutagenic agents. Acts as a DNA glycosylase that recognizes and removes damaged bases. Has a preference for oxidized purines, such as 7,8-dihydro-8-oxoguanine (8-oxoG). Has AP (apurinic/apyrimidinic) lyase activity and introduces nicks in the DNA strand. Cleaves the DNA backbone by beta-delta elimination to generate a single-strand break at the site of the removed base with both 3'- and 5'-phosphates. This chain is Formamidopyrimidine-DNA glycosylase, found in Beijerinckia indica subsp. indica (strain ATCC 9039 / DSM 1715 / NCIMB 8712).